The chain runs to 346 residues: UDP-N-acetylenolpyruvoylglucosamine reductase (346 aa).

The region spanning 18–189 is the FAD-binding PCMH-type domain; it reads LHAQARAFIA…VSVVFALKTH (172 aa). Residue Arg165 is part of the active site. Ser240 acts as the Proton donor in catalysis. Glu336 is a catalytic residue.

The protein belongs to the MurB family. The cofactor is FAD.

The protein localises to the cytoplasm. The catalysed reaction is UDP-N-acetyl-alpha-D-muramate + NADP(+) = UDP-N-acetyl-3-O-(1-carboxyvinyl)-alpha-D-glucosamine + NADPH + H(+). The protein operates within cell wall biogenesis; peptidoglycan biosynthesis. Its function is as follows. Cell wall formation. This chain is UDP-N-acetylenolpyruvoylglucosamine reductase, found in Neisseria gonorrhoeae (strain ATCC 700825 / FA 1090).